The primary structure comprises 246 residues: uncharacterized protein (246 aa).

Serine 194 is modified (phosphoserine).

This is an uncharacterized protein from Schizosaccharomyces pombe (strain 972 / ATCC 24843) (Fission yeast).